A 742-amino-acid chain; its full sequence is MLKLFSAFRKNKIWDFNGGIHPPEMKTQSNGTPLRQVPLAQRFVIPLKQHIGAEGELCVSVGDKVLRGQPLTRGRGKMLPVHAPTSGTVTAIAPHSTSHPSALAELSVIIDADGEDCWIPRDGWADYRSRSREELIERIHQFGVAGLGGAGFPTGVKLQGGGDKIETLIINAAECEPYITADDRLMQDCAAQVVEGIRILAHILQPREILIGIEDNKPQAISMLRAVLADSHDISLRVIPTKYPSGGAKQLTYILTGKQVPHGGRSSDIGVLMQNVGTAYAVKRAVIDGEPITERVVTLTGEAIARPGNVWARLGTPVRHLLNDAGFCPSADQMVIMGGPLMGFTLPWLDVPVVKITNCLLAPSANELGEPQEEQSCIRCSACADACPADLLPQQLYWFSKGQQHDKATTHNIADCIECGACAWVCPSNIPLVQYFRQEKAEIAAIRQEEKRAAEAKARFEARQARLEREKAARLERHKSAAVQPAAKDKDAIAAALARVKEKQAQATQPIVIKAGERPDNSAIIAAREARKAQARAKQAELQQTNDAATVADPRKTAVEAAIARAKARKLEQQQANAEPEEQIDPRKAAVEAAIARAKARKLEQQQANAEPEEQIDPRKAAVEAAIARAKARKLEQQQANAEPEEQIDPRKAAVEAAIARAKARKLEQQQQANAEPEEQVDPRKAAVEAAIARAKARKLEQQQQANAEPEEQVDPRKAAVAAAIARVQAKKAAQQKVVNED.

2 4Fe-4S ferredoxin-type domains span residues 369–397 (GEPQ…QQLY) and 407–436 (KATT…VQYF). [4Fe-4S] cluster contacts are provided by cysteine 377, cysteine 380, cysteine 383, cysteine 387, cysteine 416, cysteine 419, cysteine 422, and cysteine 426. Positions 602-719 (KLEQQQANAE…PEEQVDPRKA (118 aa)) are disordered.

It belongs to the 4Fe4S bacterial-type ferredoxin family. RnfC subfamily. The complex is composed of six subunits: RsxA, RsxB, RsxC, RsxD, RsxE and RsxG. [4Fe-4S] cluster serves as cofactor.

The protein resides in the cell inner membrane. Functionally, part of a membrane-bound complex that couples electron transfer with translocation of ions across the membrane. Required to maintain the reduced state of SoxR. This is Ion-translocating oxidoreductase complex subunit C from Escherichia coli O6:H1 (strain CFT073 / ATCC 700928 / UPEC).